The primary structure comprises 157 residues: Putative electron transport protein YsaA (157 aa).

4Fe-4S ferredoxin-type domains follow at residues 2-32, 48-80, 80-109, and 112-144; these read NRFIIADATKCIGCRTCEVACAVSHHENQDC, KDHCWTTAVACHQCEDAPCANVCPVDAISREHG, GHIFVEQTRCIGCKSCMLACPFGAMEVVSS, and KARAIKCDLCWHRETGPACVEACPTKALQCMDV. Cys-12, Cys-15, Cys-18, Cys-22, Cys-58, Cys-61, Cys-66, Cys-70, Cys-89, Cys-92, Cys-95, Cys-99, Cys-118, Cys-121, Cys-130, and Cys-134 together coordinate [4Fe-4S] cluster.

The chain is Putative electron transport protein YsaA (ysaA) from Escherichia coli (strain K12).